Reading from the N-terminus, the 199-residue chain is Putative peroxiredoxin ycf42 (199 aa).

Residues 8–165 (LRVGQLAPDF…TLRVLQAIQY (158 aa)) form the Thioredoxin domain. The active-site Cysteine sulfenic acid (-SOH) intermediate is C53.

The protein belongs to the peroxiredoxin family. AhpC/Prx1 subfamily. In terms of assembly, homodimer; disulfide-linked, upon oxidation. Post-translationally, the Cys-53-SH group is the primary site of oxidation by H(2)O(2), and the oxidized Cys-53 (probably Cys-SOH) rapidly reacts with Cys-174-SH of the other subunit to form an intermolecular disulfide. This disulfide is subsequently reduced by thioredoxin.

The protein localises to the plastid. It localises to the chloroplast. The catalysed reaction is a hydroperoxide + [thioredoxin]-dithiol = an alcohol + [thioredoxin]-disulfide + H2O. Functionally, thiol-specific peroxidase that catalyzes the reduction of hydrogen peroxide and organic hydroperoxides to water and alcohols, respectively. Plays a role in cell protection against oxidative stress by detoxifying peroxides. In Pyropia yezoensis (Susabi-nori), this protein is Putative peroxiredoxin ycf42 (ycf42).